We begin with the raw amino-acid sequence, 185 residues long: Translation initiation factor IF-3 (185 aa).

The protein belongs to the IF-3 family. Monomer.

It localises to the cytoplasm. Its function is as follows. IF-3 binds to the 30S ribosomal subunit and shifts the equilibrium between 70S ribosomes and their 50S and 30S subunits in favor of the free subunits, thus enhancing the availability of 30S subunits on which protein synthesis initiation begins. The sequence is that of Translation initiation factor IF-3 from Streptococcus pneumoniae (strain Hungary19A-6).